Consider the following 701-residue polypeptide: Pentatricopeptide repeat-containing protein At5g50390, chloroplastic (701 aa).

A chloroplast-targeting transit peptide spans 1 to 47 (MEIPLSRYQSIRLDEIRDSSSNPKVLTFPRKFSLRGRRWKNPFGRLS). PPR repeat units follow at residues 86 to 116 (SGVT…LEIR), 122 to 156 (GVST…GFEP), 157 to 187 (EQYM…IPER), 188 to 218 (NLYS…MWEE), 223 to 257 (ETHT…GVVD), 258 to 288 (NTFV…MPEK), 289 to 323 (TTVA…GVSI), 324 to 358 (DQFT…GFES), 359 to 389 (EIVA…LPRK), 390 to 424 (NIIS…NVAP), 425 to 460 (NHVT…GIKP), and 461 to 491 (RAMH…APLK). The tract at residues 496-571 (MWAALLNACR…MPACTWVEVG (76 aa)) is type E motif. The type E(+) motif; degenerate stretch occupies residues 572–606 (DQTHSFLSGDRFDSYNETVKRQIYQKVDELMEEIS). The tract at residues 607–701 (EYGYSEEEQH…EGKCSCGGYW (95 aa)) is type DYW motif.

Belongs to the PPR family. PCMP-H subfamily.

The protein localises to the plastid. The protein resides in the chloroplast. This chain is Pentatricopeptide repeat-containing protein At5g50390, chloroplastic (PCMP-H58), found in Arabidopsis thaliana (Mouse-ear cress).